Here is a 76-residue protein sequence, read N- to C-terminus: Acyl carrier protein (76 aa).

Residues 1-75 (MIFEKIKDLI…DIVFYITKNT (75 aa)) form the Carrier domain. S35 bears the O-(pantetheine 4'-phosphoryl)serine mark.

The protein belongs to the acyl carrier protein (ACP) family. In terms of processing, 4'-phosphopantetheine is transferred from CoA to a specific serine of apo-ACP by AcpS. This modification is essential for activity because fatty acids are bound in thioester linkage to the sulfhydryl of the prosthetic group.

The protein resides in the cytoplasm. It functions in the pathway lipid metabolism; fatty acid biosynthesis. Functionally, carrier of the growing fatty acid chain in fatty acid biosynthesis. In Aster yellows witches'-broom phytoplasma (strain AYWB), this protein is Acyl carrier protein.